The primary structure comprises 485 residues: N-succinylglutamate 5-semialdehyde dehydrogenase (485 aa).

220–225 (GSANTG) contacts NAD(+). Residues Glu-243 and Cys-278 contribute to the active site.

The protein belongs to the aldehyde dehydrogenase family. AstD subfamily.

The enzyme catalyses N-succinyl-L-glutamate 5-semialdehyde + NAD(+) + H2O = N-succinyl-L-glutamate + NADH + 2 H(+). It participates in amino-acid degradation; L-arginine degradation via AST pathway; L-glutamate and succinate from L-arginine: step 4/5. Catalyzes the NAD-dependent reduction of succinylglutamate semialdehyde into succinylglutamate. This Vibrio parahaemolyticus serotype O3:K6 (strain RIMD 2210633) protein is N-succinylglutamate 5-semialdehyde dehydrogenase.